The primary structure comprises 436 residues: Histone acetyltransferase type B subunit 2 (436 aa).

Over residues 1–19 (MEPYDDGFIEEQEEQEEER) the composition is skewed to acidic residues. Positions 1 to 22 (MEPYDDGFIEEQEEQEEERTEE) are disordered. WD repeat units follow at residues 136–176 (DHKG…SLPT), 187–227 (GHTK…KGNK), 237–277 (HHSS…TTRA), 284–324 (QHRD…TKLH), and 328–368 (CHTD…EEQT). The interval 370-374 (DDAQD) is interaction with the histone H4 N-terminus. The stretch at 385–425 (GHTNRISDFSWNLNDPWVLCSAAEDNLLQVWKVADAIVGKD) is one WD 6 repeat.

The protein belongs to the WD repeat RBAP46/RBAP48/MSI1 family. In terms of assembly, component of the HAT-B complex composed of at least hat1 and hat2. The HAT-B complex binds to histone H4 tail.

Its subcellular location is the cytoplasm. It is found in the nucleus. In terms of biological role, regulatory subunit of the histone acetylase B (HAT-B) complex. The complex acetylates 'Lys-12' of histone H4 which is required for telomeric silencing. The chain is Histone acetyltransferase type B subunit 2 (hat2) from Aspergillus oryzae (strain ATCC 42149 / RIB 40) (Yellow koji mold).